The following is a 360-amino-acid chain: Dihydroorotate dehydrogenase (quinone) (360 aa).

FMN-binding positions include alanine 67–lysine 71 and threonine 91. Lysine 71 serves as a coordination point for substrate. Asparagine 116–phenylalanine 120 is a substrate binding site. Residues asparagine 145 and asparagine 176 each contribute to the FMN site. Asparagine 176 is a binding site for substrate. Serine 179 functions as the Nucleophile in the catalytic mechanism. Asparagine 181 serves as a coordination point for substrate. 2 residues coordinate FMN: lysine 222 and serine 250. Position 251–252 (asparagine 251–threonine 252) interacts with substrate. FMN is bound by residues glycine 272, glycine 301, and tyrosine 322 to serine 323.

This sequence belongs to the dihydroorotate dehydrogenase family. Type 2 subfamily. As to quaternary structure, monomer. FMN serves as cofactor.

Its subcellular location is the cell membrane. It catalyses the reaction (S)-dihydroorotate + a quinone = orotate + a quinol. Its pathway is pyrimidine metabolism; UMP biosynthesis via de novo pathway; orotate from (S)-dihydroorotate (quinone route): step 1/1. Functionally, catalyzes the conversion of dihydroorotate to orotate with quinone as electron acceptor. The sequence is that of Dihydroorotate dehydrogenase (quinone) from Deinococcus deserti (strain DSM 17065 / CIP 109153 / LMG 22923 / VCD115).